An 87-amino-acid chain; its full sequence is HssA/B-like protein 18 (87 aa).

It belongs to the hssA/B family.

The sequence is that of HssA/B-like protein 18 (hssl18) from Dictyostelium discoideum (Social amoeba).